A 255-amino-acid polypeptide reads, in one-letter code: Pimeloyl-[acyl-carrier protein] methyl ester esterase (255 aa).

One can recognise an AB hydrolase-1 domain in the interval 16 to 241; that stretch reads LVLVHGWGMN…QSSHAPFMTE (226 aa). Substrate contacts are provided by residues Trp22, 82–83, and 143–147; these read SL and FMALQ. The Nucleophile role is filled by Ser82. Active-site residues include Asp207 and His235. His235 is a substrate binding site.

The protein belongs to the AB hydrolase superfamily. Carboxylesterase BioH family. In terms of assembly, monomer.

It localises to the cytoplasm. The catalysed reaction is 6-carboxyhexanoyl-[ACP] methyl ester + H2O = 6-carboxyhexanoyl-[ACP] + methanol + H(+). It functions in the pathway cofactor biosynthesis; biotin biosynthesis. Functionally, the physiological role of BioH is to remove the methyl group introduced by BioC when the pimeloyl moiety is complete. It allows to synthesize pimeloyl-ACP via the fatty acid synthetic pathway through the hydrolysis of the ester bonds of pimeloyl-ACP esters. In Vibrio cholerae serotype O1 (strain ATCC 39315 / El Tor Inaba N16961), this protein is Pimeloyl-[acyl-carrier protein] methyl ester esterase.